The sequence spans 191 residues: dCTP deaminase (191 aa).

DCTP-binding positions include 112–117, 136–138, Gln-157, Tyr-173, and Gln-183; these read KSTYAR and TLE. The Proton donor/acceptor role is filled by Glu-138.

This sequence belongs to the dCTP deaminase family. As to quaternary structure, homotrimer.

The catalysed reaction is dCTP + H2O + H(+) = dUTP + NH4(+). The protein operates within pyrimidine metabolism; dUMP biosynthesis; dUMP from dCTP (dUTP route): step 1/2. Catalyzes the deamination of dCTP to dUTP. This chain is dCTP deaminase, found in Psychrobacter sp. (strain PRwf-1).